The chain runs to 574 residues: Proline--tRNA ligase (574 aa).

Belongs to the class-II aminoacyl-tRNA synthetase family. ProS type 1 subfamily. Homodimer.

The protein localises to the cytoplasm. It catalyses the reaction tRNA(Pro) + L-proline + ATP = L-prolyl-tRNA(Pro) + AMP + diphosphate. Catalyzes the attachment of proline to tRNA(Pro) in a two-step reaction: proline is first activated by ATP to form Pro-AMP and then transferred to the acceptor end of tRNA(Pro). As ProRS can inadvertently accommodate and process non-cognate amino acids such as alanine and cysteine, to avoid such errors it has two additional distinct editing activities against alanine. One activity is designated as 'pretransfer' editing and involves the tRNA(Pro)-independent hydrolysis of activated Ala-AMP. The other activity is designated 'posttransfer' editing and involves deacylation of mischarged Ala-tRNA(Pro). The misacylated Cys-tRNA(Pro) is not edited by ProRS. The polypeptide is Proline--tRNA ligase (Marinomonas sp. (strain MWYL1)).